The following is a 131-amino-acid chain: Profilin-1 (131 aa).

Belongs to the profilin family. Occurs in many kinds of cells as a complex with monomeric actin in a 1:1 ratio.

It is found in the cytoplasm. Its subcellular location is the cytoskeleton. Functionally, binds to actin and affects the structure of the cytoskeleton. At high concentrations, profilin prevents the polymerization of actin, whereas it enhances it at low concentrations. By binding to PIP2, it inhibits the formation of IP3 and DG. This chain is Profilin-1, found in Lilium longiflorum (Trumpet lily).